A 304-amino-acid chain; its full sequence is MSWIERIKSNITPTRKASIPEGVWTKCDSCGQVLYRAELERNLEVCPKCDHHMRMSARNRLHSLLDEGSLVELGSELEPKDVLKFRDSKKYKDRLASAQKETGEKDALVVMKGTLHDMPIVAAAFEFSFMGGSMGSVVGARFVRAVEQALEDNCPLICFSASGGARMQEALMSLMQMAKTSAALAKMQERGLPYISVLTDPTMGGVSASFAMLGDLNIAEPKALIGFAGPRVIEQTVREKLPPGFQRSEFLIEKGAIDMIVRRPEMRLKLASVLAKLMNLPAPNPDAPREGEVVPPVPDQEPEA.

Residues Val23–Glu292 form the CoA carboxyltransferase N-terminal domain. The Zn(2+) site is built by Cys27, Cys30, Cys46, and Cys49. A C4-type zinc finger spans residues Cys27–Cys49. The disordered stretch occupies residues Pro281–Ala304. Residues Pro295–Ala304 show a composition bias toward pro residues.

Belongs to the AccD/PCCB family. Acetyl-CoA carboxylase is a heterohexamer composed of biotin carboxyl carrier protein (AccB), biotin carboxylase (AccC) and two subunits each of ACCase subunit alpha (AccA) and ACCase subunit beta (AccD). Zn(2+) is required as a cofactor.

It is found in the cytoplasm. The enzyme catalyses N(6)-carboxybiotinyl-L-lysyl-[protein] + acetyl-CoA = N(6)-biotinyl-L-lysyl-[protein] + malonyl-CoA. It participates in lipid metabolism; malonyl-CoA biosynthesis; malonyl-CoA from acetyl-CoA: step 1/1. Component of the acetyl coenzyme A carboxylase (ACC) complex. Biotin carboxylase (BC) catalyzes the carboxylation of biotin on its carrier protein (BCCP) and then the CO(2) group is transferred by the transcarboxylase to acetyl-CoA to form malonyl-CoA. In Citrobacter koseri (strain ATCC BAA-895 / CDC 4225-83 / SGSC4696), this protein is Acetyl-coenzyme A carboxylase carboxyl transferase subunit beta.